Reading from the N-terminus, the 2214-residue chain is Genome polyprotein (2214 aa).

2 disordered regions span residues 1-21 (MGAQVSSQKVGAHENTNVATG) and 600-619 (KPQKQLTAQSTPSTSGVNSQ). Glycine 2 carries the N-myristoyl glycine; by host lipid modification. At 2-1525 (GAQVSSQKVG…NLNRAMTILQ (1524 aa)) the chain is on the cytoplasmic side. Amphipathic alpha-helix regions lie at residues 580 to 601 (QGIEETIDTVISNALQLSQPKP) and 581 to 601 (GIEETIDTVISNALQLSQPKP). Residues 606–619 (TAQSTPSTSGVNSQ) show a composition bias toward polar residues. Catalysis depends on for protease 2A activity residues histidine 906 and aspartate 924. Zn(2+) is bound by residues cysteine 941 and cysteine 943. Cysteine 995 functions as the For protease 2A activity in the catalytic mechanism. Residues cysteine 1001 and histidine 1003 each contribute to the Zn(2+) site. The interval 1133 to 1205 (GDSWLKKFTE…HQSCPSQEQQ (73 aa)) is membrane-binding. An oligomerization region spans residues 1133–1271 (GDSWLKKFTE…SPGTGKSIAT (139 aa)). The tract at residues 1154-1158 (SNKIS) is RNA-binding. One can recognise an SF3 helicase domain in the interval 1237-1393 (ENTINNYIQF…SEHSIKGKLN (157 aa)). 1261–1268 (GSPGTGKS) serves as a coordination point for ATP. Zn(2+) is bound by residues cysteine 1401, cysteine 1404, cysteine 1413, and cysteine 1418. Residues 1401 to 1418 (CKDCPQPANFKKCCPLVC) form a C4-type zinc finger. The tract at residues 1445–1452 (ERNRRANI) is RNA-binding. The tract at residues 1456–1461 (MEALFQ) is oligomerization. Residues 1526–1541 (AVTTFAAVAAVVYVMY) lie within the membrane without spanning it. Residues 1542–2214 (KLFAGHQGAY…TLYRRWLDSF (673 aa)) are Cytoplasmic-facing. Tyrosine 1551 bears the O-(5'-phospho-RNA)-tyrosine mark. The Peptidase C3 domain occupies 1571–1749 (GPGFDYAVAM…FAAALKRSYF (179 aa)). Active-site for protease 3C activity residues include histidine 1610, glutamate 1641, and cysteine 1717. The region spanning 1980-2095 (EKLFAFDYTG…SYPHEVDASL (116 aa)) is the RdRp catalytic domain. 2 residues coordinate Mg(2+): aspartate 1986 and aspartate 2081.

The protein belongs to the picornaviruses polyprotein family. As to quaternary structure, interacts with capsid protein VP1 and capsid protein VP3 to form heterotrimeric protomers. Interacts with capsid protein VP0, and capsid protein VP3 to form heterotrimeric protomers. Five protomers subsequently associate to form pentamers which serve as building blocks for the capsid. Interacts with capsid protein VP2, capsid protein VP3 and capsid protein VP4 following cleavage of capsid protein VP0. In terms of assembly, interacts with capsid protein VP1 and capsid protein VP3 in the mature capsid. As to quaternary structure, interacts with capsid protein VP0 and capsid protein VP1 to form heterotrimeric protomers. Five protomers subsequently associate to form pentamers which serve as building blocks for the capsid. Interacts with capsid protein VP4 in the mature capsid. Interacts with protein 2C; this interaction may be important for virion morphogenesis. Interacts with capsid protein VP1 and capsid protein VP3. In terms of assembly, homodimer. As to quaternary structure, homohexamer; forms a hexameric ring structure with 6-fold symmetry characteristic of AAA+ ATPases. Interacts (via N-terminus) with host RTN3 (via reticulon domain); this interaction is important for viral replication. Interacts with capsid protein VP3; this interaction may be important for virion morphogenesis. Interacts with protein 3CD. In terms of assembly, homodimer. Interacts with host GBF1. Interacts (via GOLD domain) with host ACBD3 (via GOLD domain); this interaction allows the formation of a viral protein 3A/ACBD3 heterotetramer with a 2:2 stoichiometry, which will stimulate the recruitment of host PI4KB in order to synthesize PI4P at the viral RNA replication sites. As to quaternary structure, interacts with RNA-directed RNA polymerase. Interacts with protein 3AB and with RNA-directed RNA polymerase. In terms of assembly, interacts with Viral protein genome-linked and with protein 3CD. The cofactor is Mg(2+). Specific enzymatic cleavages in vivo by the viral proteases yield processing intermediates and the mature proteins. Post-translationally, myristoylation is required for the formation of pentamers during virus assembly. Further assembly of 12 pentamers and a molecule of genomic RNA generates the provirion. In terms of processing, during virion maturation, immature virions are rendered infectious following cleavage of VP0 into VP4 and VP2. This maturation seems to be an autocatalytic event triggered by the presence of RNA in the capsid and it is followed by a conformational change infectious virion. Myristoylation is required during RNA encapsidation and formation of the mature virus particle. Post-translationally, VPg is uridylylated by the polymerase into VPg-pUpU. This acts as a nucleotide-peptide primer for the genomic RNA replication.

Its subcellular location is the virion. The protein resides in the host cytoplasm. It localises to the host cytoplasmic vesicle membrane. It is found in the host nucleus. The enzyme catalyses a ribonucleoside 5'-triphosphate + H2O = a ribonucleoside 5'-diphosphate + phosphate + H(+). The catalysed reaction is Selective cleavage of Tyr-|-Gly bond in the picornavirus polyprotein.. It carries out the reaction RNA(n) + a ribonucleoside 5'-triphosphate = RNA(n+1) + diphosphate. It catalyses the reaction Selective cleavage of Gln-|-Gly bond in the poliovirus polyprotein. In other picornavirus reactions Glu may be substituted for Gln, and Ser or Thr for Gly.. Its activity is regulated as follows. Replication or transcription is subject to high level of random mutations by the nucleotide analog ribavirin. In terms of biological role, forms an icosahedral capsid of pseudo T=3 symmetry with capsid proteins VP2 and VP3. The capsid is 300 Angstroms in diameter, composed of 60 copies of each capsid protein and enclosing the viral positive strand RNA genome. Capsid protein VP1 mainly forms the vertices of the capsid. Capsid protein VP1 interacts with host cell receptor to provide virion attachment to target host cells. This attachment induces virion internalization. Tyrosine kinases are probably involved in the entry process. After binding to its receptor, the capsid undergoes conformational changes. Capsid protein VP1 N-terminus (that contains an amphipathic alpha-helix) and capsid protein VP4 are externalized. Together, they shape a pore in the host membrane through which viral genome is translocated to host cell cytoplasm. Forms an icosahedral capsid of pseudo T=3 symmetry with capsid proteins VP2 and VP3. The capsid is 300 Angstroms in diameter, composed of 60 copies of each capsid protein and enclosing the viral positive strand RNA genome. Its function is as follows. Lies on the inner surface of the capsid shell. After binding to the host receptor, the capsid undergoes conformational changes. Capsid protein VP4 is released, Capsid protein VP1 N-terminus is externalized, and together, they shape a pore in the host membrane through which the viral genome is translocated into the host cell cytoplasm. Functionally, component of immature procapsids, which is cleaved into capsid proteins VP4 and VP2 after maturation. Allows the capsid to remain inactive before the maturation step. In terms of biological role, cysteine protease that cleaves viral polyprotein and specific host proteins. It is responsible for the autocatalytic cleavage between the P1 and P2 regions, which is the first cleavage occurring in the polyprotein. Also cleaves the host translation initiation factor EIF4G1, in order to shut down the capped cellular mRNA translation. Inhibits the host nucleus-cytoplasm protein and RNA trafficking by cleaving host members of the nuclear pores. Counteracts stress granule formation probably by antagonizing its assembly or promoting its dissassembly. Cleaves and inhibits host IFIH1/MDA5, thereby inhibiting the type-I IFN production and the establishment of the antiviral state. Cleaves and inhibits host MAVS, thereby inhibiting the type-I IFN production and the establishment of the antiviral state. Plays an essential role in the virus replication cycle by acting as a viroporin. Creates a pore in the host endoplasmic reticulum and as a consequence releases Ca2+ in the cytoplasm of infected cell. In turn, high levels of cytoplasmic calcium may trigger membrane trafficking and transport of viral ER-associated proteins to viroplasms, sites of viral genome replication. Its function is as follows. Induces and associates with structural rearrangements of intracellular membranes. Displays RNA-binding, nucleotide binding and NTPase activities. May play a role in virion morphogenesis and viral RNA encapsidation by interacting with the capsid protein VP3. Functionally, localizes the viral replication complex to the surface of membranous vesicles. Together with protein 3CD binds the Cis-Active RNA Element (CRE) which is involved in RNA synthesis initiation. Acts as a cofactor to stimulate the activity of 3D polymerase, maybe through a nucleid acid chaperone activity. In terms of biological role, localizes the viral replication complex to the surface of membranous vesicles. It inhibits host cell endoplasmic reticulum-to-Golgi apparatus transport and causes the disassembly of the Golgi complex, possibly through GBF1 interaction. This would result in depletion of MHC, trail receptors and IFN receptors at the host cell surface. Plays an essential role in viral RNA replication by recruiting ACBD3 and PI4KB at the viral replication sites, thereby allowing the formation of the rearranged membranous structures where viral replication takes place. Acts as a primer for viral RNA replication and remains covalently bound to viral genomic RNA. VPg is uridylylated prior to priming replication into VPg-pUpU. The oriI viral genomic sequence may act as a template for this. The VPg-pUpU is then used as primer on the genomic RNA poly(A) by the RNA-dependent RNA polymerase to replicate the viral genome. During genome replication, the VPg-RNA linkage is removed by the host TDP2, thereby accelerating replication. During the late stage of the replication cycle, host TDP2 is excluded from sites of viral RNA synthesis and encapsidation, allowing for the generation of progeny virions. Its function is as follows. Involved in the viral replication complex and viral polypeptide maturation. It exhibits protease activity with a specificity and catalytic efficiency that is different from protease 3C. Protein 3CD lacks polymerase activity. Protein 3CD binds to the 5'UTR of the viral genome. Functionally, replicates the viral genomic RNA on the surface of intracellular membranes. May form linear arrays of subunits that propagate along a strong head-to-tail interaction called interface-I. Covalently attaches UMP to a tyrosine of VPg, which is used to prime RNA synthesis. The positive stranded RNA genome is first replicated at virus induced membranous vesicles, creating a dsRNA genomic replication form. This dsRNA is then used as template to synthesize positive stranded RNA genomes. ss(+)RNA genomes are either translated, replicated or encapsidated. In terms of biological role, major viral protease that mediates proteolytic processing of the polyprotein. Cleaves host EIF5B, contributing to host translation shutoff. Also cleaves host PABPC1, contributing to host translation shutoff. Cleaves host NLRP1, triggers host N-glycine-mediated degradation of the autoinhibitory NLRP1 N-terminal fragment. This chain is Genome polyprotein, found in Coxsackievirus A24 (strain EH24/70).